Reading from the N-terminus, the 367-residue chain is MIQFQPVLGSLKSYEAGKPIELVVREFGIDPDQIIKLGSNENPFGCAQPVVEAVQKAASKMPYYPDDSYLELKTALASKFDLTPDRIILGNGSDQVLDFACRCVLGPGDSILINRITFAMYRIYALQCGAKVHSTETVLHDLNAFLDLAKSIRPKIIFLCTPSNPIGDALFKSDVYDFLRQIPSNTLVVIDAAYMEFGKKKDSNTFISAKEVTDLFPNVFYTGTFSKAYGLGGMRIGYGIGSKELISNLYKMRPPFNVANLSALAATEALKNESHVESYLDNNLKEMKRYEKFAAEQSVEFIDSYANFITFFARKRGKSSTEISQSLLKQGIILRNLRSYDLNAIRITIGKPQQNDRVLTALNQEFS.

Lys-227 bears the N6-(pyridoxal phosphate)lysine mark.

Belongs to the class-II pyridoxal-phosphate-dependent aminotransferase family. Histidinol-phosphate aminotransferase subfamily. As to quaternary structure, homodimer. Requires pyridoxal 5'-phosphate as cofactor.

The enzyme catalyses L-histidinol phosphate + 2-oxoglutarate = 3-(imidazol-4-yl)-2-oxopropyl phosphate + L-glutamate. It participates in amino-acid biosynthesis; L-histidine biosynthesis; L-histidine from 5-phospho-alpha-D-ribose 1-diphosphate: step 7/9. The protein is Histidinol-phosphate aminotransferase of Leptospira borgpetersenii serovar Hardjo-bovis (strain JB197).